The primary structure comprises 191 residues: Guanylate kinase (191 aa).

The Guanylate kinase-like domain maps to 6–184 (GLIIILSSPS…TIQQIHTIIL (179 aa)). 13 to 20 (SPSGAGKS) is a binding site for ATP.

Belongs to the guanylate kinase family.

The protein resides in the cytoplasm. It catalyses the reaction GMP + ATP = GDP + ADP. Its function is as follows. Essential for recycling GMP and indirectly, cGMP. This is Guanylate kinase from Rickettsia bellii (strain RML369-C).